The chain runs to 94 residues: Aspartyl/glutamyl-tRNA(Asn/Gln) amidotransferase subunit C (94 aa).

Residues 72–94 (PREKALQGAPEVSEGQFKVPRVV) form a disordered region.

It belongs to the GatC family. Heterotrimer of A, B and C subunits.

The catalysed reaction is L-glutamyl-tRNA(Gln) + L-glutamine + ATP + H2O = L-glutaminyl-tRNA(Gln) + L-glutamate + ADP + phosphate + H(+). It catalyses the reaction L-aspartyl-tRNA(Asn) + L-glutamine + ATP + H2O = L-asparaginyl-tRNA(Asn) + L-glutamate + ADP + phosphate + 2 H(+). In terms of biological role, allows the formation of correctly charged Asn-tRNA(Asn) or Gln-tRNA(Gln) through the transamidation of misacylated Asp-tRNA(Asn) or Glu-tRNA(Gln) in organisms which lack either or both of asparaginyl-tRNA or glutaminyl-tRNA synthetases. The reaction takes place in the presence of glutamine and ATP through an activated phospho-Asp-tRNA(Asn) or phospho-Glu-tRNA(Gln). The sequence is that of Aspartyl/glutamyl-tRNA(Asn/Gln) amidotransferase subunit C from Moorella thermoacetica (strain ATCC 39073 / JCM 9320).